We begin with the raw amino-acid sequence, 323 residues long: Methionyl-tRNA formyltransferase (323 aa).

115–118 lines the (6S)-5,6,7,8-tetrahydrofolate pocket; the sequence is SLLP.

Belongs to the Fmt family.

It carries out the reaction L-methionyl-tRNA(fMet) + (6R)-10-formyltetrahydrofolate = N-formyl-L-methionyl-tRNA(fMet) + (6S)-5,6,7,8-tetrahydrofolate + H(+). In terms of biological role, attaches a formyl group to the free amino group of methionyl-tRNA(fMet). The formyl group appears to play a dual role in the initiator identity of N-formylmethionyl-tRNA by promoting its recognition by IF2 and preventing the misappropriation of this tRNA by the elongation apparatus. This Lactococcus lactis subsp. cremoris (strain MG1363) protein is Methionyl-tRNA formyltransferase.